Consider the following 310-residue polypeptide: Zinc finger protein-like 1 (310 aa).

A B box-type; degenerate zinc finger spans residues 1 to 43; it reads MGLCKCPKRKVTNLFCFEHRVNVCEHCLVANHAKCIVQSYLQW. Topologically, residues 1 to 266 are cytoplasmic; that stretch reads MGLCKCPKRK…RPLTLLQRAG (266 aa). The segment at 53–101 adopts an RING-type; degenerate zinc-finger fold; that stretch reads CRLCNIPLASRETTRLVCYDLFHWACLNERAAQLPRNTAPAGYQCPSCN. The segment at 145-231 is disordered; the sequence is PEPLNTSDFS…RTPGLHGDCD (87 aa). Residues 148-165 are compositionally biased toward polar residues; that stretch reads LNTSDFSDWSSFNASSTP. A compositionally biased stretch (basic and acidic residues) spans 213–224; sequence KVYDTRDDDRTP. The helical transmembrane segment at 267 to 287 threads the bilayer; that stretch reads LLLLLGLLGFLALLALMSRLG. The Lumenal segment spans residues 288 to 310; the sequence is RAAADSDPNLDPLMNPHIRVGPS.

The protein belongs to the ZFPL1 family. Interacts with GOLGA2/GM130. In terms of processing, phosphorylated. As to expression, expressed strongly in the exocrine pancreas.

It is found in the golgi apparatus. Its subcellular location is the cis-Golgi network membrane. Functionally, required for cis-Golgi integrity and efficient ER to Golgi transport. Involved in the maintenance of the integrity of the cis-Golgi, possibly via its interaction with GOLGA2/GM130. This chain is Zinc finger protein-like 1 (ZFPL1), found in Homo sapiens (Human).